A 136-amino-acid chain; its full sequence is Probable endoribonuclease MazF7 (136 aa).

The tract at residues 115 to 136 (TGPERGEAATHSPVRWTGGRDP) is disordered.

This sequence belongs to the PemK/MazF family. Forms a complex with cognate antitoxin MazE7.

Functionally, toxic component of a type II toxin-antitoxin (TA) system. Upon expression in E.coli and M.smegmatis inhibits cell growth and colony formation. Its toxic effect is neutralized by coexpression with cognate antitoxin MazE7. Probably an endoribonuclease. The polypeptide is Probable endoribonuclease MazF7 (mazF7) (Mycobacterium tuberculosis (strain ATCC 25618 / H37Rv)).